The chain runs to 486 residues: Lipase 1 (486 aa).

A disulfide bridge links C58 with C82. The active-site Acyl-ester intermediate is S193. The active-site Charge relay system is D303. N332 carries an N-linked (GlcNAc...) asparagine glycan. The active-site Charge relay system is the H392.

The protein belongs to the type-B carboxylesterase/lipase family.

It catalyses the reaction a triacylglycerol + H2O = a diacylglycerol + a fatty acid + H(+). The protein is Lipase 1 (LIP1) of Yarrowia lipolytica (strain CLIB 122 / E 150) (Yeast).